A 47-amino-acid chain; its full sequence is Small, acid-soluble spore protein N (47 aa).

Positions 1–12 (MSNPKGSRKHFV) are enriched in basic residues. Positions 1–47 (MSNPKGSRKHFVPNHIGTQPRAAGGNKGKQMQDQSGQHAQVIQTKGE) are disordered. A compositionally biased stretch (polar residues) spans 29–47 (KQMQDQSGQHAQVIQTKGE).

This sequence belongs to the SspN family.

It is found in the spore core. The protein is Small, acid-soluble spore protein N of Geobacillus kaustophilus (strain HTA426).